The sequence spans 482 residues: Glutamate synthase [NADPH] small chain (482 aa).

The 4Fe-4S ferredoxin-type domain occupies 39-72; sequence ERANEQANRCSQCGVPFCQVHCPVSNNIPDWLKL. Cys95, Cys99, Cys105, and Cys109 together coordinate [4Fe-4S] cluster.

In terms of assembly, aggregate of 4 catalytic active heterodimers, consisting of a large and a small subunit. It depends on [4Fe-4S] cluster as a cofactor.

It carries out the reaction 2 L-glutamate + NADP(+) = L-glutamine + 2-oxoglutarate + NADPH + H(+). It functions in the pathway amino-acid biosynthesis; L-glutamate biosynthesis via GLT pathway; L-glutamate from 2-oxoglutarate and L-glutamine (NADP(+) route): step 1/1. Its pathway is energy metabolism; nitrogen metabolism. This Azospirillum brasilense protein is Glutamate synthase [NADPH] small chain (gltD).